Here is a 352-residue protein sequence, read N- to C-terminus: Ion-translocating oxidoreductase complex subunit D (352 aa).

The next 4 membrane-spanning stretches (helical) occupy residues 20–40 (IMLL…WFFG), 42–62 (GTLF…AIVL), 69–91 (VASH…SIPP), and 123–143 (PAMI…TSWL). Threonine 187 is modified (FMN phosphoryl threonine). 5 helical membrane passes run 215-235 (LAGV…VFLL), 242-262 (WHIP…GWLF), 267-287 (LASP…FFIL), 301-321 (LIFG…GGYP), and 322-342 (DGVA…DYYT).

This sequence belongs to the NqrB/RnfD family. The complex is composed of six subunits: RsxA, RsxB, RsxC, RsxD, RsxE and RsxG. FMN is required as a cofactor.

Its subcellular location is the cell inner membrane. In terms of biological role, part of a membrane-bound complex that couples electron transfer with translocation of ions across the membrane. Required to maintain the reduced state of SoxR. This chain is Ion-translocating oxidoreductase complex subunit D, found in Salmonella typhi.